Consider the following 128-residue polypeptide: Aspartate 1-decarboxylase (128 aa).

Serine 25 functions as the Schiff-base intermediate with substrate; via pyruvic acid in the catalytic mechanism. At serine 25 the chain carries Pyruvic acid (Ser). Threonine 57 contacts substrate. Residue tyrosine 58 is the Proton donor of the active site. Residue 73–75 coordinates substrate; that stretch reads GSA.

Belongs to the PanD family. Heterooctamer of four alpha and four beta subunits. It depends on pyruvate as a cofactor. Is synthesized initially as an inactive proenzyme, which is activated by self-cleavage at a specific serine bond to produce a beta-subunit with a hydroxyl group at its C-terminus and an alpha-subunit with a pyruvoyl group at its N-terminus.

It is found in the cytoplasm. It catalyses the reaction L-aspartate + H(+) = beta-alanine + CO2. Its pathway is cofactor biosynthesis; (R)-pantothenate biosynthesis; beta-alanine from L-aspartate: step 1/1. In terms of biological role, catalyzes the pyruvoyl-dependent decarboxylation of aspartate to produce beta-alanine. The polypeptide is Aspartate 1-decarboxylase (Burkholderia cenocepacia (strain ATCC BAA-245 / DSM 16553 / LMG 16656 / NCTC 13227 / J2315 / CF5610) (Burkholderia cepacia (strain J2315))).